A 151-amino-acid polypeptide reads, in one-letter code: Deoxyuridine 5'-triphosphate nucleotidohydrolase (151 aa).

Residues 70–72 (RSG), Asn-83, 87–89 (LID), and Met-97 contribute to the substrate site.

The protein belongs to the dUTPase family. The cofactor is Mg(2+).

It catalyses the reaction dUTP + H2O = dUMP + diphosphate + H(+). It participates in pyrimidine metabolism; dUMP biosynthesis; dUMP from dCTP (dUTP route): step 2/2. This enzyme is involved in nucleotide metabolism: it produces dUMP, the immediate precursor of thymidine nucleotides and it decreases the intracellular concentration of dUTP so that uracil cannot be incorporated into DNA. In Shigella flexneri serotype 5b (strain 8401), this protein is Deoxyuridine 5'-triphosphate nucleotidohydrolase.